The primary structure comprises 406 residues: Erythromycin esterase type I (406 aa).

Its function is as follows. This enzyme confers resistance to erythromycin through inactivation by hydrolyzing the lactone ring of the antibiotic. This chain is Erythromycin esterase type I (ereA), found in Escherichia coli.